A 318-amino-acid chain; its full sequence is MGKGAAKYGFKSGVFPTTRSILKSPTTKQTDIINKVKSPKPKGVLGIGYAKGVKHPKGSHRLSPKVNFIDVDNLIAKTVAEPQSIKSSNGSAQKVRLQKAELRRKFLIEAFRKEEARLLHKHEYLQKRTKELEKAKELELEKLNKEKSSDLTIMTLDKMMSQPLLRNRSPEESELLKLKRNYNRSLLNFQAHKKKLNELLNLYHVANEFIVTESQLLKKIDKVFNDETEEFTDAYDVTSNFTQFGNRKLLLSGNTTLQTQINNAIMGSLSNEKFFDISLVDSYLNKDLKNISNKIDSKLNPTSNGAGNNGNNNNTTNL.

Positions 295–318 (IDSKLNPTSNGAGNNGNNNNTTNL) are disordered. Over residues 300–318 (NPTSNGAGNNGNNNNTTNL) the composition is skewed to low complexity.

Belongs to the mitochondrion-specific ribosomal protein mS26 family. Component of the mitochondrial small ribosomal subunit (mt-SSU). Mature yeast 74S mitochondrial ribosomes consist of a small (37S) and a large (54S) subunit. The 37S small subunit contains a 15S ribosomal RNA (15S mt-rRNA) and 34 different proteins. The 54S large subunit contains a 21S rRNA (21S mt-rRNA) and 46 different proteins.

It is found in the mitochondrion. In terms of biological role, component of the mitochondrial ribosome (mitoribosome), a dedicated translation machinery responsible for the synthesis of mitochondrial genome-encoded proteins, including at least some of the essential transmembrane subunits of the mitochondrial respiratory chain. The mitoribosomes are attached to the mitochondrial inner membrane and translation products are cotranslationally integrated into the membrane. This Saccharomyces cerevisiae (strain ATCC 204508 / S288c) (Baker's yeast) protein is Small ribosomal subunit protein mS26 (PET123).